We begin with the raw amino-acid sequence, 1063 residues long: NAD-specific glutamate dehydrogenase (1063 aa).

This sequence belongs to the Glu/Leu/Phe/Val dehydrogenases family. Highly divergent. As to quaternary structure, homotetramer.

The catalysed reaction is L-glutamate + NAD(+) + H2O = 2-oxoglutarate + NH4(+) + NADH + H(+). Its activity is regulated as follows. Allosterically activated by NADP(+). This chain is NAD-specific glutamate dehydrogenase, found in Achlya klebsiana.